Here is a 359-residue protein sequence, read N- to C-terminus: MTMENKPAGQNGLTYAQAGVDIDAGNLMVEKIKPLVRSTRRPGADGEIGGFGGLFDLKAAGFKGPVLVAANDGVGTKLKIAIDADIHDTVGIDLVAMCVNDLVVQGAEPLFFLDYYATGKLSPDQGVAIVSGIAEGCRQAGCALIGGETAEMPGMYRDGDYDLAGFAVGAAERDRLLPRGDIAEGDIILGLASSGVHSNGFSLVRRIVELSGLGWKSQAPFQPGATLGEALLTPTRIYVKPLLAAIRACDGIKALAHITGGGFPDNIPRVLPKGLAAEIDLPAIAVPPVFSWLAKTGNVEPNEMLRTFNCGIGMIAVVNPAKVDEVIAALAAEGEKVVTLGRMTRREKDGVIYKGQLAL.

It belongs to the AIR synthase family.

The protein localises to the cytoplasm. The enzyme catalyses 2-formamido-N(1)-(5-O-phospho-beta-D-ribosyl)acetamidine + ATP = 5-amino-1-(5-phospho-beta-D-ribosyl)imidazole + ADP + phosphate + H(+). Its pathway is purine metabolism; IMP biosynthesis via de novo pathway; 5-amino-1-(5-phospho-D-ribosyl)imidazole from N(2)-formyl-N(1)-(5-phospho-D-ribosyl)glycinamide: step 2/2. This is Phosphoribosylformylglycinamidine cyclo-ligase from Brucella melitensis biotype 2 (strain ATCC 23457).